Consider the following 429-residue polypeptide: MNFSESERLQQLSNEYILGGVNSPSRSYKAVGGGAPVVMKEGHGAYLYDVDGNKFIDYLQAYGPIITGHAHPHITKAIQEQAAKGVLFGTPTELEIEFSKKLRDAIPSLEKIRFVNSGTEAVMTTIRVARAYTKRNKIIKFAGSYHGHSDLVLVAAGSGPSQLGSPDSAGVPESVAREVITVPFNDINAYKEAIEFWGDEIAAVLVEPIVGNFGMVMPQPGFLEEVNEISHNNGTLVIYDEVITAFRFHYGAAQDLLGVIPDLTAFGKIVGGGLPIGGYGGRQDIMEQVAPLGPAYQAGTMAGNPLSMKAGIALLEVLEQDGVYEKLDSLGQQLEEGLLKLIEKHNITATINRIYGSLTLYFTDEKVTHYDQVEHSDGEAFGKFFKLMLNQGINLAPSKFEAWFLTTEHTEEDIQQTLKAADYAFSQMK.

An N6-(pyridoxal phosphate)lysine modification is found at Lys268.

The protein belongs to the class-III pyridoxal-phosphate-dependent aminotransferase family. HemL subfamily. In terms of assembly, homodimer. It depends on pyridoxal 5'-phosphate as a cofactor.

It is found in the cytoplasm. The enzyme catalyses (S)-4-amino-5-oxopentanoate = 5-aminolevulinate. It functions in the pathway porphyrin-containing compound metabolism; protoporphyrin-IX biosynthesis; 5-aminolevulinate from L-glutamyl-tRNA(Glu): step 2/2. The sequence is that of Glutamate-1-semialdehyde 2,1-aminomutase 2 from Staphylococcus aureus (strain MSSA476).